The chain runs to 892 residues: Protein translocase subunit SecA (892 aa).

Residues Gln-89, 107 to 111 (GEGKT), and Asp-517 each bind ATP. Cys-879, Cys-881, Cys-890, and His-891 together coordinate Zn(2+).

Belongs to the SecA family. Monomer and homodimer. Part of the essential Sec protein translocation apparatus which comprises SecA, SecYEG and auxiliary proteins SecDF-YajC and YidC. The cofactor is Zn(2+).

Its subcellular location is the cell inner membrane. The protein localises to the cytoplasm. It catalyses the reaction ATP + H2O + cellular proteinSide 1 = ADP + phosphate + cellular proteinSide 2.. Its function is as follows. Part of the Sec protein translocase complex. Interacts with the SecYEG preprotein conducting channel. Has a central role in coupling the hydrolysis of ATP to the transfer of proteins into and across the cell membrane, serving as an ATP-driven molecular motor driving the stepwise translocation of polypeptide chains across the membrane. This is Protein translocase subunit SecA from Ruthia magnifica subsp. Calyptogena magnifica.